A 250-amino-acid chain; its full sequence is 5'-nucleotidase SurE (250 aa).

4 residues coordinate a divalent metal cation: D8, D9, S40, and N94.

The protein belongs to the SurE nucleotidase family. A divalent metal cation serves as cofactor.

The protein resides in the cytoplasm. It catalyses the reaction a ribonucleoside 5'-phosphate + H2O = a ribonucleoside + phosphate. In terms of biological role, nucleotidase that shows phosphatase activity on nucleoside 5'-monophosphates. The protein is 5'-nucleotidase SurE of Wolbachia sp. subsp. Drosophila simulans (strain wRi).